A 332-amino-acid polypeptide reads, in one-letter code: MLARTCLRSTRTFASAKNGAFKFAKRSASTQSSGAAAESPLRLNIAAAAATAVAAGSIAWYYHLYGFASAMTPAEEGLHATKYPWVHEQWLKTFDHQALRRGFQVYREVCASCHSLSRVPYRALVGTILTVDEAKALAEENEYDTEPNDQGEIEKRPGKLSDYLPDPYKNDEAARFANNGALPPDLSLIVKARHGGCDYIFSLLTGYPDEPPAGASVGAGLNFNPYFPGTGIAMARVLYDGLVDYEDGTPASTSQMAKDVVEFLNWAAEPEMDDRKRMGMKVLVVTSVLFALSVYVKRYKWAWLKSRKIVYDPPKSPPPATNLALPQQRAKS.

Residues 1 to 70 (MLARTCLRST…YYHLYGFASA (70 aa)) constitute a mitochondrion transit peptide. Over 71–277 (MTPAEEGLHA…AEPEMDDRKR (207 aa)) the chain is Mitochondrial intermembrane. In terms of domain architecture, Cytochrome c spans 97–250 (QALRRGFQVY…GLVDYEDGTP (154 aa)). The heme c site is built by cysteine 110, cysteine 113, and histidine 114. Over residues 139-151 (EENEYDTEPNDQG) the composition is skewed to acidic residues. Positions 139–162 (EENEYDTEPNDQGEIEKRPGKLSD) are disordered. Residue methionine 234 participates in heme c binding. The chain crosses the membrane as a helical span at residues 278-296 (MGMKVLVVTSVLFALSVYV). Residues 297–332 (KRYKWAWLKSRKIVYDPPKSPPPATNLALPQQRAKS) lie on the Mitochondrial matrix side of the membrane.

The protein belongs to the cytochrome c family. Component of the ubiquinol-cytochrome c oxidoreductase (cytochrome b-c1 complex, complex III, CIII), a multisubunit enzyme composed of 10 subunits. The complex is composed of 3 respiratory subunits cytochrome b (cob), cytochrome c1 (cyt-1) and Rieske protein (fes-1), 2 core protein subunits pep and ucr-1, and 5 low-molecular weight protein subunits qcr6, qcr7, qcr8, qcr9 and probably NCU16844/qcr10. The complex exists as an obligatory dimer and forms supercomplexes (SCs) in the inner mitochondrial membrane with NADH-ubiquinone oxidoreductase (complex I, CI) and cytochrome c oxidase (complex IV, CIV), resulting in different assemblies (supercomplexes SCI(1)III(2), SCIII(2)IV(1) and SCIII(2)IV(2) as well as higher order I(x)III(y)IV(z) megacomplexes). The cofactor is heme c.

It is found in the mitochondrion inner membrane. It catalyses the reaction a quinol + 2 Fe(III)-[cytochrome c](out) = a quinone + 2 Fe(II)-[cytochrome c](out) + 2 H(+)(out). Functionally, component of the ubiquinol-cytochrome c oxidoreductase, a multisubunit transmembrane complex that is part of the mitochondrial electron transport chain which drives oxidative phosphorylation. The respiratory chain contains 3 multisubunit complexes succinate dehydrogenase (complex II, CII), ubiquinol-cytochrome c oxidoreductase (cytochrome b-c1 complex, complex III, CIII) and cytochrome c oxidase (complex IV, CIV), that cooperate to transfer electrons derived from NADH and succinate to molecular oxygen, creating an electrochemical gradient over the inner membrane that drives transmembrane transport and the ATP synthase. The cytochrome b-c1 complex catalyzes electron transfer from ubiquinol to cytochrome c, linking this redox reaction to translocation of protons across the mitochondrial inner membrane, with protons being carried across the membrane as hydrogens on the quinol. In the process called Q cycle, 2 protons are consumed from the matrix, 4 protons are released into the intermembrane space and 2 electrons are passed to cytochrome c. Cytochrome c1 is a catalytic core subunit containing a c-type heme. It transfers electrons from the [2Fe-2S] iron-sulfur cluster of the Rieske protein to cytochrome c. This is Cytochrome c1, heme protein, mitochondrial (cyt-1) from Neurospora crassa (strain ATCC 24698 / 74-OR23-1A / CBS 708.71 / DSM 1257 / FGSC 987).